The chain runs to 172 residues: Large ribosomal subunit protein uL10 (172 aa).

It belongs to the universal ribosomal protein uL10 family. In terms of assembly, part of the ribosomal stalk of the 50S ribosomal subunit. The N-terminus interacts with L11 and the large rRNA to form the base of the stalk. The C-terminus forms an elongated spine to which L12 dimers bind in a sequential fashion forming a multimeric L10(L12)X complex.

Functionally, forms part of the ribosomal stalk, playing a central role in the interaction of the ribosome with GTP-bound translation factors. The sequence is that of Large ribosomal subunit protein uL10 from Methylorubrum extorquens (strain CM4 / NCIMB 13688) (Methylobacterium extorquens).